A 138-amino-acid polypeptide reads, in one-letter code: Large ribosomal subunit protein uL16 (138 aa).

Residues 1 to 17 are compositionally biased toward basic residues; the sequence is MLIPRKVKHRKQHHPRQ. The tract at residues 1–24 is disordered; sequence MLIPRKVKHRKQHHPRQRGIASGG.

Belongs to the universal ribosomal protein uL16 family. As to quaternary structure, part of the 50S ribosomal subunit.

In terms of biological role, binds 23S rRNA and is also seen to make contacts with the A and possibly P site tRNAs. This chain is Large ribosomal subunit protein uL16, found in Mycolicibacterium gilvum (strain PYR-GCK) (Mycobacterium gilvum (strain PYR-GCK)).